We begin with the raw amino-acid sequence, 881 residues long: MAASVEHRPFTSHQHGVVRSFKSYPDVPRPKKLPLPQPLSDSTNDNDEEAAVWKELVLKSSAGVEPSIFDPRDDGTSDQWIKRNASMIRLTGKHPFNAEPPLPRLMQHGFITPSPIHYVRSHGPVPHARWEDWTVEVTGLVTRPTCFTMEQLVNDFPSHEFPATLVCAGNRRKEQNMVKQSIGFNWGAGGVSTSVWRGVSLRSLLKRCGIYSRAKGALHVCFEGAEDLPGGGGSNYGTSLMREVALDPSRDIILAYMQNGELLSPDHGFPVRMIIPGFIGGRMVKWLKRIVVSNQQSQSHYHYKDNKLFPSHVDAELANEEDWWYKPEYIINEVNINSVITTPSHQEILPINSWTTQMPYSMRGYAYSGGGRKVTRVEVTLDGGETWQVCSVERLEKPNKYGKYWCWCFWSLEVEVLDILGAKEIAVRAWDEAQNTQPEKLIWNTMGMINNCWFRVKTNVCKPKKGEIGIVFEHPTQPGNQSGGWMAREKQLEKSSESNPILKKSVSSPFMNTATKSYSLSEVRRHNNRDSAWIIVNGHVYDCTRFLKDHPGGEDSILLNAGTDCTEEFEAIHSDKAKKMLEDYRIGELMTTDYTSDSSSSNNSVHGNSETTHLAPIREVALNPREKIPCKLLSKTSISHDVRLLRFALPAEDQVMGLPVGNHVFLCATVDEKLCMRAYTPTSSVDEVGFFDLVVKVYFKGVHPNFPNGGIMSQHLDSLPIGSVVDVKGPLGHIEYTGRGNFLVHGKPRFAKRLTMLAGGTGITPIYQVVQAILKDPEDRTEMYVVYANRTEDDILLKEELDEWAKKHDRLKVWYVLQANIREGWEYSVGFITESILREHVPLASPDTLALTCGPPPMIQFAVQPNLEKLGYDIQNDLLVF.

A disordered region spans residues 1–46 (MAASVEHRPFTSHQHGVVRSFKSYPDVPRPKKLPLPQPLSDSTNDN). Cys167 contributes to the Mo-molybdopterin binding site. Residues 515–590 (TKSYSLSEVR…LEDYRIGELM (76 aa)) form the Cytochrome b5 heme-binding domain. The heme site is built by His550 and His573. Residues 625–737 (REKIPCKLLS…KGPLGHIEYT (113 aa)) form the FAD-binding FR-type domain. FAD contacts are provided by residues 677–680 (RAYT), 694–698 (VVKVY), Phe699, Phe706, 711–713 (IMS), and Thr764.

It belongs to the nitrate reductase family. As to quaternary structure, homodimer. FAD serves as cofactor. The cofactor is heme. Requires Mo-molybdopterin as cofactor.

The catalysed reaction is nitrite + NAD(+) + H2O = nitrate + NADH + H(+). Functionally, nitrate reductase is a key enzyme involved in the first step of nitrate assimilation in plants, fungi and bacteria. The sequence is that of Nitrate reductase [NADH] 1 (NIA1) from Phaseolus vulgaris (Kidney bean).